The sequence spans 394 residues: MRSLSIFGATGSIGESTFDLVMRKGGPEAFRTVALTGGRNVARLAEMARALKAELAVTAHEECLPALREALAGSGTEVAGGTQAIAEAADRPADWTMSAIVGAAGLVPGMRALKHGRTLALANKESLVTAGQLLMRTAEENGATILPVDSEHSAVFQALAGEDTTCVERVIITASGGPFRDWTLEQIRGCTVAQAMAHPNWSMGQRISIDSASMFNKALELIETREFFGFEPERIEAVVHPQSIVHALVGFCDGGIMAHLGPADMRHAIGFALNWPGRGEVPVARLDLAQIANLTFQKPDEERFPALRLAREVMAARGLSGAAFNAAKEIALDHFIAGNIGFLDMAAVVEEALSAVSADPLFGKVPSTLEEVLAMDHLARKAAEEAASFRQQKR.

8 residues coordinate NADPH: threonine 10, glycine 11, serine 12, isoleucine 13, glycine 38, arginine 39, asparagine 40, and asparagine 123. Lysine 124 is a 1-deoxy-D-xylulose 5-phosphate binding site. Residue glutamate 125 participates in NADPH binding. Residue aspartate 149 participates in Mn(2+) binding. Serine 150, glutamate 151, serine 175, and histidine 198 together coordinate 1-deoxy-D-xylulose 5-phosphate. Glutamate 151 is a binding site for Mn(2+). NADPH is bound at residue glycine 204. 1-deoxy-D-xylulose 5-phosphate-binding residues include serine 211, asparagine 216, lysine 217, and glutamate 220. Glutamate 220 is a Mn(2+) binding site.

Belongs to the DXR family. The cofactor is Mg(2+). It depends on Mn(2+) as a cofactor.

The enzyme catalyses 2-C-methyl-D-erythritol 4-phosphate + NADP(+) = 1-deoxy-D-xylulose 5-phosphate + NADPH + H(+). Its pathway is isoprenoid biosynthesis; isopentenyl diphosphate biosynthesis via DXP pathway; isopentenyl diphosphate from 1-deoxy-D-xylulose 5-phosphate: step 1/6. In terms of biological role, catalyzes the NADPH-dependent rearrangement and reduction of 1-deoxy-D-xylulose-5-phosphate (DXP) to 2-C-methyl-D-erythritol 4-phosphate (MEP). In Cereibacter sphaeroides (strain ATCC 17025 / ATH 2.4.3) (Rhodobacter sphaeroides), this protein is 1-deoxy-D-xylulose 5-phosphate reductoisomerase.